Consider the following 481-residue polypeptide: Proline--tRNA ligase (481 aa).

This sequence belongs to the class-II aminoacyl-tRNA synthetase family. ProS type 3 subfamily. Homodimer.

Its subcellular location is the cytoplasm. The enzyme catalyses tRNA(Pro) + L-proline + ATP = L-prolyl-tRNA(Pro) + AMP + diphosphate. Its function is as follows. Catalyzes the attachment of proline to tRNA(Pro) in a two-step reaction: proline is first activated by ATP to form Pro-AMP and then transferred to the acceptor end of tRNA(Pro). The polypeptide is Proline--tRNA ligase (Chloroherpeton thalassium (strain ATCC 35110 / GB-78)).